We begin with the raw amino-acid sequence, 878 residues long: Alanine--tRNA ligase (878 aa).

The Zn(2+) site is built by His-562, His-566, Cys-670, and His-674.

It belongs to the class-II aminoacyl-tRNA synthetase family. It depends on Zn(2+) as a cofactor.

The protein localises to the cytoplasm. It catalyses the reaction tRNA(Ala) + L-alanine + ATP = L-alanyl-tRNA(Ala) + AMP + diphosphate. In terms of biological role, catalyzes the attachment of alanine to tRNA(Ala) in a two-step reaction: alanine is first activated by ATP to form Ala-AMP and then transferred to the acceptor end of tRNA(Ala). Also edits incorrectly charged Ser-tRNA(Ala) and Gly-tRNA(Ala) via its editing domain. In Acinetobacter baumannii (strain ACICU), this protein is Alanine--tRNA ligase.